We begin with the raw amino-acid sequence, 1441 residues long: Envelopment polyprotein (1441 aa).

An N-terminal signal peptide occupies residues 1 to 13 (MIRMLVLIVVTAA). At 14 to 200 (SPVYQRCFQD…GSIANSICQN (187 aa)) the chain is on the lumenal side. An N-linked (GlcNAc...) asparagine; by host glycan is attached at Asn57. The chain crosses the membrane as a helical span at residues 201–221 (IEIIILVTLTLLIFILLSILS). Residues 222–305 (KTYICYLLMP…RAARVMCKSK (84 aa)) lie on the Cytoplasmic side of the membrane. The chain crosses the membrane as a helical span at residues 306–326 (GPASILSIITAVLVLTFVTPI). Over 327–365 (NSMVLGESKETFELEELPDDMLEMALRINSYYFTCILNY) the chain is Lumenal. The chain crosses the membrane as a helical span at residues 366 to 386 (AVSWGLIIAGLLVGLIFKKYQ). Residues 387–452 (HRFLNIYAMY…LVQYKAKWMM (66 aa)) are Cytoplasmic-facing. The helical transmembrane segment at 453–473 (NFLIIYIFLILIKDSAIVGQA) threads the bilayer. At 474–1395 (TGTDFTTCLE…EPFKNLFGSY (922 aa)) the chain is on the lumenal side. N-linked (GlcNAc...) asparagine; by host glycans are attached at residues Asn490 and Asn1177. A helical transmembrane segment spans residues 1396–1416 (IGIFYTFIISIIALLVIIYVL). At 1417 to 1441 (LPICFKLRDTLRKHDDAYKREMKIR) the chain is on the cytoplasmic side.

It belongs to the orthobunyavirus envelope glycoprotein family. As to quaternary structure, glycoprotein C and Glycoprotein N interact with each other. Post-translationally, specific enzymatic cleavages in vivo yield mature proteins including nonstructural protein NSm, glycoprotein C, and glycoprotein N.

The protein localises to the virion membrane. It is found in the host Golgi apparatus membrane. The protein resides in the host endoplasmic reticulum membrane. Its function is as follows. Glycoprotein C and Glycoprotein N interact with each other and are present at the surface of the virion. They are able to attach the virion to a cell receptor and to promote fusion of membranes after endocytosis of the virion. The chain is Envelopment polyprotein (GP) from Bunyavirus La Crosse.